The sequence spans 336 residues: Phosphate acyltransferase (336 aa).

It belongs to the PlsX family. Homodimer. Probably interacts with PlsY.

Its subcellular location is the cytoplasm. The enzyme catalyses a fatty acyl-[ACP] + phosphate = an acyl phosphate + holo-[ACP]. It functions in the pathway lipid metabolism; phospholipid metabolism. Its function is as follows. Catalyzes the reversible formation of acyl-phosphate (acyl-PO(4)) from acyl-[acyl-carrier-protein] (acyl-ACP). This enzyme utilizes acyl-ACP as fatty acyl donor, but not acyl-CoA. The sequence is that of Phosphate acyltransferase from Dictyoglomus turgidum (strain DSM 6724 / Z-1310).